Consider the following 216-residue polypeptide: Octanoyltransferase (216 aa).

In terms of domain architecture, BPL/LPL catalytic spans 31-205; sequence STTRDEVWLV…ELVTLLDYEQ (175 aa). Residues 70–77, 137–139, and 150–152 contribute to the substrate site; these read RGGQVTYH, SLG, and GLA. Catalysis depends on Cys168, which acts as the Acyl-thioester intermediate.

Belongs to the LipB family.

The protein localises to the cytoplasm. It carries out the reaction octanoyl-[ACP] + L-lysyl-[protein] = N(6)-octanoyl-L-lysyl-[protein] + holo-[ACP] + H(+). The protein operates within protein modification; protein lipoylation via endogenous pathway; protein N(6)-(lipoyl)lysine from octanoyl-[acyl-carrier-protein]: step 1/2. In terms of biological role, catalyzes the transfer of endogenously produced octanoic acid from octanoyl-acyl-carrier-protein onto the lipoyl domains of lipoate-dependent enzymes. Lipoyl-ACP can also act as a substrate although octanoyl-ACP is likely to be the physiological substrate. The protein is Octanoyltransferase of Vibrio cholerae serotype O1 (strain ATCC 39315 / El Tor Inaba N16961).